Here is a 201-residue protein sequence, read N- to C-terminus: Holliday junction branch migration complex subunit RuvA (201 aa).

The tract at residues 1–63 (MIEYIKGEIA…EDAYVLYGFA (63 aa)) is domain I. Positions 64-142 (DKQERELFLL…TGAMAATAVG (79 aa)) are domain II. The interval 143-153 (GAAGALLPAMN) is flexible linker. Residues 153-201 (NAEVQEEAIAALTMLGFAAAPSQKAVLAILKEEPDAPVEKVIKLALKRL) form a domain III region.

Belongs to the RuvA family. Homotetramer. Forms an RuvA(8)-RuvB(12)-Holliday junction (HJ) complex. HJ DNA is sandwiched between 2 RuvA tetramers; dsDNA enters through RuvA and exits via RuvB. An RuvB hexamer assembles on each DNA strand where it exits the tetramer. Each RuvB hexamer is contacted by two RuvA subunits (via domain III) on 2 adjacent RuvB subunits; this complex drives branch migration. In the full resolvosome a probable DNA-RuvA(4)-RuvB(12)-RuvC(2) complex forms which resolves the HJ.

The protein localises to the cytoplasm. In terms of biological role, the RuvA-RuvB-RuvC complex processes Holliday junction (HJ) DNA during genetic recombination and DNA repair, while the RuvA-RuvB complex plays an important role in the rescue of blocked DNA replication forks via replication fork reversal (RFR). RuvA specifically binds to HJ cruciform DNA, conferring on it an open structure. The RuvB hexamer acts as an ATP-dependent pump, pulling dsDNA into and through the RuvAB complex. HJ branch migration allows RuvC to scan DNA until it finds its consensus sequence, where it cleaves and resolves the cruciform DNA. The protein is Holliday junction branch migration complex subunit RuvA of Bacteroides fragilis (strain ATCC 25285 / DSM 2151 / CCUG 4856 / JCM 11019 / LMG 10263 / NCTC 9343 / Onslow / VPI 2553 / EN-2).